A 354-amino-acid polypeptide reads, in one-letter code: Magnesium-protoporphyrin IX monomethyl ester [oxidative] cyclase (354 aa).

This sequence belongs to the AcsF family. The cofactor is Fe cation.

It is found in the plastid. The protein resides in the chloroplast. The enzyme catalyses Mg-protoporphyrin IX 13-monomethyl ester + 3 NADPH + 3 O2 + 2 H(+) = 3,8-divinyl protochlorophyllide a + 3 NADP(+) + 5 H2O. It functions in the pathway porphyrin-containing compound metabolism; chlorophyll biosynthesis (light-independent). In terms of biological role, catalyzes the formation of the isocyclic ring in chlorophyll biosynthesis. Mediates the cyclase reaction, which results in the formation of divinylprotochlorophyllide (Pchlide) characteristic of all chlorophylls from magnesium-protoporphyrin IX 13-monomethyl ester (MgPMME). The polypeptide is Magnesium-protoporphyrin IX monomethyl ester [oxidative] cyclase (Cyanidium caldarium (Red alga)).